We begin with the raw amino-acid sequence, 214 residues long: Small ribosomal subunit protein uS2 (214 aa).

Belongs to the universal ribosomal protein uS2 family.

In Thermofilum pendens (strain DSM 2475 / Hrk 5), this protein is Small ribosomal subunit protein uS2.